Consider the following 420-residue polypeptide: Aminoacyltransferase FemA (420 aa).

Belongs to the FemABX family. Homodimer. Interacts with FemB.

It localises to the cytoplasm. The catalysed reaction is beta-D-GlcNAc-(1-&gt;4)-Mur2Ac(oyl-L-Ala-D-isoglutaminyl-L-Lys-(N(6)-Gly)-D-Ala-D-Ala)-di-trans,octa-cis-undecaprenyl diphosphate + 2 glycyl-tRNA(Gly) = MurNAc-L-Ala-D-isoglutaminyl-L-Lys-(N(6)-tri-Gly)-D-Ala-D-Ala-diphospho-di-trans,octa-cis-undecaprenyl-GlcNAc + 2 tRNA(Gly) + 2 H(+). Catalyzes the formation of the pentaglycine interpeptide bridge, which is characteristic of the S.aureus peptidoglycan. Adds glycines 2 and 3 of the pentaglycine bridge, using glycyl-tRNA(Gly) as donor. Involved in resistance to methicillin. This is Aminoacyltransferase FemA (femA) from Staphylococcus aureus (strain NCTC 8325 / PS 47).